Consider the following 99-residue polypeptide: Small ribosomal subunit protein bS21 (99 aa).

Residues 60–99 (KKLQREGLLPMKPKPVFGAGPGGDRRGPGAGPGAGPRPAR) form a disordered region.

This sequence belongs to the bacterial ribosomal protein bS21 family.

The polypeptide is Small ribosomal subunit protein bS21 (Rhodopseudomonas palustris (strain BisA53)).